The sequence spans 87 residues: Large ribosomal subunit protein eL31 (87 aa).

Belongs to the eukaryotic ribosomal protein eL31 family.

The sequence is that of Large ribosomal subunit protein eL31 from Methanoculleus marisnigri (strain ATCC 35101 / DSM 1498 / JR1).